The sequence spans 189 residues: Cancer/testis antigen family 45 member A3 (189 aa).

Residues 81 to 119 (KDRMMQKPGSNAPVGGNVTSSFSGDDLECRETASSPKSQ) are disordered.

The protein belongs to the CT45 family. Testis specific. Expressed in cancer cell lines.

Its subcellular location is the nucleus. The polypeptide is Cancer/testis antigen family 45 member A3 (Homo sapiens (Human)).